Reading from the N-terminus, the 345-residue chain is Phosphoribosylformylglycinamidine cyclo-ligase (345 aa).

It belongs to the AIR synthase family. Homodimer.

It localises to the cytoplasm. The catalysed reaction is 2-formamido-N(1)-(5-O-phospho-beta-D-ribosyl)acetamidine + ATP = 5-amino-1-(5-phospho-beta-D-ribosyl)imidazole + ADP + phosphate + H(+). It functions in the pathway purine metabolism; IMP biosynthesis via de novo pathway; 5-amino-1-(5-phospho-D-ribosyl)imidazole from N(2)-formyl-N(1)-(5-phospho-D-ribosyl)glycinamide: step 2/2. The polypeptide is Phosphoribosylformylglycinamidine cyclo-ligase (Escherichia coli O157:H7).